A 78-amino-acid polypeptide reads, in one-letter code: RNA-binding protein Hfq (78 aa).

The Sm domain maps to 10–69; that stretch reads DPFLNALRKEHVPVSIYLVNGIKLQGHIESFDQYVVLLRNTVTQMVYKHAISTVVPARAV.

Belongs to the Hfq family. Homohexamer.

In terms of biological role, RNA chaperone that binds small regulatory RNA (sRNAs) and mRNAs to facilitate mRNA translational regulation in response to envelope stress, environmental stress and changes in metabolite concentrations. Also binds with high specificity to tRNAs. The polypeptide is RNA-binding protein Hfq (Janthinobacterium sp. (strain Marseille) (Minibacterium massiliensis)).